Consider the following 905-residue polypeptide: Transcription termination factor 1 (905 aa).

Basic and acidic residues-rich tracts occupy residues 1 to 16 (MEGESSRFEIHTPVSD) and 24 to 33 (IHKERPQKHS). Residues 1–33 (MEGESSRFEIHTPVSDKKKKKCSIHKERPQKHS) form a disordered region. The interval 1–223 (MEGESSRFEI…AHKNKSKKKK (223 aa)) is N-terminal region (NRD). Ser65 is subject to Phosphoserine. A disordered region spans residues 151–443 (SHAHKSEALH…KSRPRQKKTQ (293 aa)). Composition is skewed to basic residues over residues 163-174 (VREKKNKKHQRK) and 215-226 (HKNKSKKKKKKS). Position 240 is a phosphoserine (Ser240). Thr248 is modified (phosphothreonine). Basic residues-rich tracts occupy residues 270–283 (THKKKSKKKKKKKS), 330–339 (NKSKKKKKKS), and 385–401 (TKKKSKKRKLTSVKRAR). The residue at position 403 (Ser403) is a Phosphoserine. Positions 410 to 419 (PSKNSESTLF) are enriched in polar residues. Tyr476 bears the Phosphotyrosine mark. Ser478, Ser481, and Ser487 each carry phosphoserine. Residues 498–886 (LQEFIPNIKD…IEKESEGQAP (389 aa)) form a may be involved in interaction with ARF region. 2 consecutive Myb-like domains span residues 612–661 (DVNN…SQIS) and 661–745 (SSQR…TEIL). Residue Lys700 forms a Glycyl lysine isopeptide (Lys-Gly) (interchain with G-Cter in SUMO2) linkage. Ser872 is modified (phosphoserine).

As to quaternary structure, oligomer. The oligomeric structure enables to interact simultaneously with two separate DNA fragments. Interacts with BAZ2A/TIP5. Interacts with CAVIN1. Interacts (via the N-terminal region (NRD) and a C-terminal region) with CDKN2A/ARF; the interaction is direct. Interacts (via C-terminal region) with NPM1/B23.

The protein resides in the nucleus. The protein localises to the nucleolus. Its subcellular location is the nucleoplasm. Its function is as follows. Multifunctional nucleolar protein that terminates ribosomal gene transcription, mediates replication fork arrest and regulates RNA polymerase I transcription on chromatin. Plays a dual role in rDNA regulation, being involved in both activation and silencing of rDNA transcription. Interaction with BAZ2A/TIP5 recovers DNA-binding activity. The chain is Transcription termination factor 1 (TTF1) from Homo sapiens (Human).